Reading from the N-terminus, the 213-residue chain is Large ribosomal subunit protein uL1 (213 aa).

Belongs to the universal ribosomal protein uL1 family. In terms of assembly, part of the 50S ribosomal subunit.

In terms of biological role, binds directly to 23S rRNA. Probably involved in E site tRNA release. Its function is as follows. Protein L1 is also a translational repressor protein, it controls the translation of its operon by binding to its mRNA. The protein is Large ribosomal subunit protein uL1 of Picrophilus torridus (strain ATCC 700027 / DSM 9790 / JCM 10055 / NBRC 100828 / KAW 2/3).